Consider the following 664-residue polypeptide: Putative membrane protein Bcell_0381 (664 aa).

Positions 588–616 (DVTQDENGEEKSEEDNKEEIVEENTEEDN) are enriched in acidic residues. Residues 588–622 (DVTQDENGEEKSEEDNKEEIVEENTEEDNKEEKTI) are disordered. A helical transmembrane segment spans residues 636 to 656 (YQFLLAGIIMLVGGSCIYVFY).

The protein resides in the cell membrane. In Evansella cellulosilytica (strain ATCC 21833 / DSM 2522 / FERM P-1141 / JCM 9156 / N-4) (Bacillus cellulosilyticus), this protein is Putative membrane protein Bcell_0381.